A 283-amino-acid polypeptide reads, in one-letter code: Elongation factor Ts (283 aa).

Positions 79–82 (TDFV) are involved in Mg(2+) ion dislocation from EF-Tu.

Belongs to the EF-Ts family.

The protein localises to the cytoplasm. Its function is as follows. Associates with the EF-Tu.GDP complex and induces the exchange of GDP to GTP. It remains bound to the aminoacyl-tRNA.EF-Tu.GTP complex up to the GTP hydrolysis stage on the ribosome. This Shewanella baltica (strain OS155 / ATCC BAA-1091) protein is Elongation factor Ts.